The sequence spans 32 residues: Defensin-3 (32 aa).

3 cysteine pairs are disulfide-bonded: Cys-3–Cys-31, Cys-5–Cys-20, and Cys-10–Cys-30.

It localises to the secreted. Functionally, has antibacterial activity against the Gram-negative bacterium E.coli and the Gram-positive bacteria L.monocytogenes and S.aureus. Has antifungal activity against C.albicans. This is Defensin-3 from Papio hamadryas (Hamadryas baboon).